Consider the following 447-residue polypeptide: Phosphoglucosamine mutase (447 aa).

Ser104 functions as the Phosphoserine intermediate in the catalytic mechanism. 4 residues coordinate Mg(2+): Ser104, Asp243, Asp245, and Asp247. Phosphoserine is present on Ser104.

It belongs to the phosphohexose mutase family. It depends on Mg(2+) as a cofactor. In terms of processing, activated by phosphorylation.

It catalyses the reaction alpha-D-glucosamine 1-phosphate = D-glucosamine 6-phosphate. Catalyzes the conversion of glucosamine-6-phosphate to glucosamine-1-phosphate. The protein is Phosphoglucosamine mutase of Corynebacterium aurimucosum (strain ATCC 700975 / DSM 44827 / CIP 107346 / CN-1) (Corynebacterium nigricans).